The following is a 391-amino-acid chain: Winged helix repair factor 1 (391 aa).

Composition is skewed to low complexity over residues Met-1–Ile-24 and Leu-49–Asn-63. Positions Met-1 to Thr-95 are disordered. Acidic residues predominate over residues Gly-64–Glu-74. A compositionally biased stretch (low complexity) spans Asn-82–Thr-95.

The protein belongs to the STK19 family.

It is found in the nucleus. In terms of biological role, DNA-binding protein which is required for efficient transcription-coupled nucleotide excision repair. In Dictyostelium discoideum (Social amoeba), this protein is Winged helix repair factor 1.